We begin with the raw amino-acid sequence, 101 residues long: Small ribosomal subunit protein uS14 (101 aa).

It belongs to the universal ribosomal protein uS14 family. As to quaternary structure, part of the 30S ribosomal subunit. Contacts proteins S3 and S10.

In terms of biological role, binds 16S rRNA, required for the assembly of 30S particles and may also be responsible for determining the conformation of the 16S rRNA at the A site. This chain is Small ribosomal subunit protein uS14, found in Blochmanniella pennsylvanica (strain BPEN).